Here is a 593-residue protein sequence, read N- to C-terminus: Aspartate--tRNA ligase (593 aa).

Glu180 is an L-aspartate binding site. The aspartate stretch occupies residues 204-207 (QIFK). Arg226 provides a ligand contact to L-aspartate. ATP contacts are provided by residues 226-228 (RDE) and Gln235. His453 contributes to the L-aspartate binding site. Glu487 is an ATP binding site. Arg494 contributes to the L-aspartate binding site. Residue 539-542 (GLDR) coordinates ATP.

This sequence belongs to the class-II aminoacyl-tRNA synthetase family. Type 1 subfamily. As to quaternary structure, homodimer.

The protein resides in the cytoplasm. It catalyses the reaction tRNA(Asp) + L-aspartate + ATP = L-aspartyl-tRNA(Asp) + AMP + diphosphate. Functionally, catalyzes the attachment of L-aspartate to tRNA(Asp) in a two-step reaction: L-aspartate is first activated by ATP to form Asp-AMP and then transferred to the acceptor end of tRNA(Asp). The polypeptide is Aspartate--tRNA ligase (Clostridium botulinum (strain Loch Maree / Type A3)).